A 423-amino-acid polypeptide reads, in one-letter code: 3-phosphoshikimate 1-carboxyvinyltransferase (423 aa).

3-phosphoshikimate-binding residues include lysine 21, serine 22, and arginine 26. Lysine 21 serves as a coordination point for phosphoenolpyruvate. Residues glycine 92 and arginine 120 each contribute to the phosphoenolpyruvate site. Residues serine 166, glutamine 168, serine 194, aspartate 310, and lysine 337 each coordinate 3-phosphoshikimate. Glutamine 168 serves as a coordination point for phosphoenolpyruvate. Aspartate 310 (proton acceptor) is an active-site residue. Arginine 341, arginine 384, and lysine 409 together coordinate phosphoenolpyruvate.

The protein belongs to the EPSP synthase family. Monomer.

Its subcellular location is the cytoplasm. The enzyme catalyses 3-phosphoshikimate + phosphoenolpyruvate = 5-O-(1-carboxyvinyl)-3-phosphoshikimate + phosphate. It functions in the pathway metabolic intermediate biosynthesis; chorismate biosynthesis; chorismate from D-erythrose 4-phosphate and phosphoenolpyruvate: step 6/7. Functionally, catalyzes the transfer of the enolpyruvyl moiety of phosphoenolpyruvate (PEP) to the 5-hydroxyl of shikimate-3-phosphate (S3P) to produce enolpyruvyl shikimate-3-phosphate and inorganic phosphate. The polypeptide is 3-phosphoshikimate 1-carboxyvinyltransferase (Syntrophobacter fumaroxidans (strain DSM 10017 / MPOB)).